We begin with the raw amino-acid sequence, 363 residues long: Aminomethyltransferase (363 aa).

This sequence belongs to the GcvT family. The glycine cleavage system is composed of four proteins: P, T, L and H.

It catalyses the reaction N(6)-[(R)-S(8)-aminomethyldihydrolipoyl]-L-lysyl-[protein] + (6S)-5,6,7,8-tetrahydrofolate = N(6)-[(R)-dihydrolipoyl]-L-lysyl-[protein] + (6R)-5,10-methylene-5,6,7,8-tetrahydrofolate + NH4(+). The glycine cleavage system catalyzes the degradation of glycine. The sequence is that of Aminomethyltransferase from Thermotoga neapolitana (strain ATCC 49049 / DSM 4359 / NBRC 107923 / NS-E).